Here is a 351-residue protein sequence, read N- to C-terminus: Histidinol-phosphate aminotransferase (351 aa).

Residue Lys221 is modified to N6-(pyridoxal phosphate)lysine.

This sequence belongs to the class-II pyridoxal-phosphate-dependent aminotransferase family. Histidinol-phosphate aminotransferase subfamily. Homodimer. Requires pyridoxal 5'-phosphate as cofactor.

It carries out the reaction L-histidinol phosphate + 2-oxoglutarate = 3-(imidazol-4-yl)-2-oxopropyl phosphate + L-glutamate. It participates in amino-acid biosynthesis; L-histidine biosynthesis; L-histidine from 5-phospho-alpha-D-ribose 1-diphosphate: step 7/9. This is Histidinol-phosphate aminotransferase from Staphylococcus epidermidis (strain ATCC 12228 / FDA PCI 1200).